Here is a 434-residue protein sequence, read N- to C-terminus: Histidine--tRNA ligase (434 aa).

The interval 412–434 is disordered; the sequence is DQTTVPVEAFPGDHDAPTYEDVV.

The protein belongs to the class-II aminoacyl-tRNA synthetase family.

Its subcellular location is the cytoplasm. It catalyses the reaction tRNA(His) + L-histidine + ATP = L-histidyl-tRNA(His) + AMP + diphosphate + H(+). The sequence is that of Histidine--tRNA ligase from Haloquadratum walsbyi (strain DSM 16790 / HBSQ001).